A 226-amino-acid chain; its full sequence is Deoxyribose-phosphate aldolase (226 aa).

Residue D84 is the Proton donor/acceptor of the active site. The active-site Schiff-base intermediate with acetaldehyde is the K146. Catalysis depends on K188, which acts as the Proton donor/acceptor.

It belongs to the DeoC/FbaB aldolase family. DeoC type 1 subfamily. Homodimer.

Its subcellular location is the cytoplasm. The catalysed reaction is 2-deoxy-D-ribose 5-phosphate = D-glyceraldehyde 3-phosphate + acetaldehyde. It participates in carbohydrate degradation; 2-deoxy-D-ribose 1-phosphate degradation; D-glyceraldehyde 3-phosphate and acetaldehyde from 2-deoxy-alpha-D-ribose 1-phosphate: step 2/2. Its function is as follows. Catalyzes a reversible aldol reaction between acetaldehyde and D-glyceraldehyde 3-phosphate to generate 2-deoxy-D-ribose 5-phosphate. This chain is Deoxyribose-phosphate aldolase, found in Pyrobaculum aerophilum (strain ATCC 51768 / DSM 7523 / JCM 9630 / CIP 104966 / NBRC 100827 / IM2).